Here is a 1290-residue protein sequence, read N- to C-terminus: Nonribosomal peptide synthetase 6 (1290 aa).

The tract at residues 1-27 (MTAIDVPWLSTPRRDNSHGTRSNSSCQ) is disordered. An adenylation region spans residues 260-657 (SYQELDCQAS…AQVEHHLRSC (398 aa)). Residues 775 to 851 (APETELERKL…GLAQTHRHPV (77 aa)) enclose the Carrier domain. At serine 812 the chain carries O-(pantetheine 4'-phosphoryl)serine. A disordered region spans residues 846–870 (THRHPVRRAEVPRSSHDPDPFGRVR). The segment covering 852 to 870 (RRAEVPRSSHDPDPFGRVR) has biased composition (basic and acidic residues). The condensation stretch occupies residues 914–1162 (GGQLDPEQLR…PCMNIIPVRV (249 aa)).

It belongs to the NRP synthetase family.

In terms of biological role, nonribosomal peptide synthesis (NRPS) is a key mechanism responsible for the biosynthesis of bioactive metabolites which are potentially contributing to organismal virulence. This chain is Nonribosomal peptide synthetase 6 (NRPS6), found in Aspergillus fumigatus (strain ATCC MYA-4609 / CBS 101355 / FGSC A1100 / Af293) (Neosartorya fumigata).